A 44-amino-acid chain; its full sequence is MSDKPDMGEIQKFNKSKLKKTETQEKNPLPSKETIEQEKQAGES.

The tract at residues 1–44 (MSDKPDMGEIQKFNKSKLKKTETQEKNPLPSKETIEQEKQAGES) is disordered. An N-acetylserine modification is found at serine 2. Serine 2 carries the post-translational modification Phosphoserine. An N6-acetyllysine modification is found at lysine 4. Lysine 12 is subject to N6-acetyllysine; alternate. Lysine 12 participates in a covalent cross-link: Glycyl lysine isopeptide (Lys-Gly) (interchain with G-Cter in SUMO2); alternate. A Phosphothreonine modification is found at threonine 23. The residue at position 26 (lysine 26) is an N6-acetyllysine. Serine 31 carries the phosphoserine modification. N6-acetyllysine is present on lysine 32. Residues 33 to 44 (ETIEQEKQAGES) show a composition bias toward basic and acidic residues. Position 34 is a phosphothreonine (threonine 34). Lysine 39 carries the post-translational modification N6-acetyllysine.

This sequence belongs to the thymosin beta family. In terms of assembly, identified in a complex composed of ACTA1, COBL, GSN AND TMSB4X. Interacts with SERPINB1. AcSDKP is inactivated by ACE, which removes the dipeptide Lys-Pro from its C-terminus.

The protein resides in the cytoplasm. The protein localises to the cytoskeleton. Plays an important role in the organization of the cytoskeleton. Binds to and sequesters actin monomers (G actin) and therefore inhibits actin polymerization. In terms of biological role, potent inhibitor of bone marrow derived stem cell differentiation. Acts by inhibits the entry of hematopoietic pluripotent stem cells into the S-phase. The sequence is that of Thymosin beta-4 (TMSB4) from Notamacropus eugenii (Tammar wallaby).